Reading from the N-terminus, the 66-residue chain is Defensin-like peptide 2/4 (66 aa).

The signal sequence occupies residues 1–22 (MRLAYLLLLLVAVLFQAGGGSA). Positions 23–24 (KP) are excised as a propeptide. Met26 bears the D-methionine; in form DLP-2 mark. Disulfide bonds link Cys33-Cys63, Cys40-Cys56, and Cys48-Cys64.

In terms of processing, stereoinversion of L-Met-26 (in DLP-4) to D-Met-26 (in DLP-2). In terms of tissue distribution, produced by the crural gland and detected in venom from the spur located on each male hind leg. Is also widely expressed in both male and female tissues, including brain, intestine, kidney, lung, spleen and testis.

It localises to the secreted. Functionally, does not show antimicrobial, myotoxic, hemolytic and cell-promoting activities. The protein is Defensin-like peptide 2/4 of Ornithorhynchus anatinus (Duckbill platypus).